We begin with the raw amino-acid sequence, 358 residues long: NADH-quinone oxidoreductase subunit H (358 aa).

The next 8 membrane-spanning stretches (helical) occupy residues 20–40 (ITVGLVVSVIVKIVIILIPLI), 95–115 (ALFYIGPIMSLAPSFAAWAVI), 128–148 (IGLLYILMITSLSVYGVIIAG), 168–188 (ISYEIAMSAALVCVVMVSGSM), 206–226 (VFSWNWLPLFPIFIVYLISAV), 253–273 (GFAFALFFLAEYIFMILISAL), 290–310 (WGFIGTPSAFWMFVKMAAVLY), and 334–354 (VLIPIGFAYIVILGLWMISPL).

The protein belongs to the complex I subunit 1 family. In terms of assembly, NDH-1 is composed of 14 different subunits. Subunits NuoA, H, J, K, L, M, N constitute the membrane sector of the complex.

It is found in the cell inner membrane. The enzyme catalyses a quinone + NADH + 5 H(+)(in) = a quinol + NAD(+) + 4 H(+)(out). In terms of biological role, NDH-1 shuttles electrons from NADH, via FMN and iron-sulfur (Fe-S) centers, to quinones in the respiratory chain. The immediate electron acceptor for the enzyme in this species is believed to be ubiquinone. Couples the redox reaction to proton translocation (for every two electrons transferred, four hydrogen ions are translocated across the cytoplasmic membrane), and thus conserves the redox energy in a proton gradient. This subunit may bind ubiquinone. The sequence is that of NADH-quinone oxidoreductase subunit H from Neisseria meningitidis serogroup A / serotype 4A (strain DSM 15465 / Z2491).